The primary structure comprises 258 residues: UPF0246 protein YaaA (258 aa).

The protein belongs to the UPF0246 family.

The polypeptide is UPF0246 protein YaaA (Escherichia coli (strain UTI89 / UPEC)).